Reading from the N-terminus, the 784-residue chain is Endonuclease MutS2 (784 aa).

335 to 342 (GPNTGGKT) is a binding site for ATP. Residues 709–784 (LDLRGERYED…GTGVTIVELK (76 aa)) form the Smr domain.

This sequence belongs to the DNA mismatch repair MutS family. MutS2 subfamily. Homodimer. Binds to stalled ribosomes, contacting rRNA.

In terms of biological role, endonuclease that is involved in the suppression of homologous recombination and thus may have a key role in the control of bacterial genetic diversity. Acts as a ribosome collision sensor, splitting the ribosome into its 2 subunits. Detects stalled/collided 70S ribosomes which it binds and splits by an ATP-hydrolysis driven conformational change. Acts upstream of the ribosome quality control system (RQC), a ribosome-associated complex that mediates the extraction of incompletely synthesized nascent chains from stalled ribosomes and their subsequent degradation. Probably generates substrates for RQC. The protein is Endonuclease MutS2 of Geobacillus sp. (strain WCH70).